The sequence spans 450 residues: Phosphoglucosamine mutase 2 (450 aa).

S101 functions as the Phosphoserine intermediate in the catalytic mechanism. Positions 101, 245, 247, and 249 each coordinate Mg(2+). S101 carries the post-translational modification Phosphoserine.

This sequence belongs to the phosphohexose mutase family. Mg(2+) is required as a cofactor. Activated by phosphorylation.

The catalysed reaction is alpha-D-glucosamine 1-phosphate = D-glucosamine 6-phosphate. In terms of biological role, catalyzes the conversion of glucosamine-6-phosphate to glucosamine-1-phosphate. This is Phosphoglucosamine mutase 2 from Shewanella baltica (strain OS185).